Reading from the N-terminus, the 333-residue chain is Procathepsin L (333 aa).

Residues 1–17 (MNPTFILAALCLGIASA) form the signal peptide. Residues 18-113 (TLTFNHSLEA…KVFQEPLFYE (96 aa)) constitute a propeptide, activation peptide. Glu122 is a binding site for Zn(2+). Intrachain disulfides connect Cys135-Cys178 and Cys169-Cys211. The active site involves Cys138. Zn(2+) is bound by residues Glu163, Asp184, Glu199, Glu205, Glu209, Asp227, Asp250, His253, Asp273, and Asp275. Cys269 and Cys322 are joined by a disulfide. The active site involves His276. A propeptide spanning residues 289–291 (ESD) is cleaved from the precursor. Asn300 is a catalytic residue.

The protein belongs to the peptidase C1 family. As to quaternary structure, dimer of a heavy and a light chain linked by disulfide bonds. Interacts with Long isoform of CD74/Ii chain; the interaction stabilizes the conformation of mature CTSL. In terms of processing, during export along the endocytic pathway, pro-CTSL undergoes several proteolytic cleavages to generate the CTSL single-chain and two-chain mature forms, composed of a heavy chain linked to a light chain by disulfide bonds. Autocleavage; produces the single-chain CTSL after cleavage of the propeptide. The cleavage can be intermolecular.

The protein localises to the lysosome. The protein resides in the apical cell membrane. It is found in the cytoplasmic vesicle. Its subcellular location is the secretory vesicle. It localises to the chromaffin granule. The protein localises to the secreted. The protein resides in the extracellular space. The catalysed reaction is Specificity close to that of papain. As compared to cathepsin B, cathepsin L exhibits higher activity toward protein substrates, but has little activity on Z-Arg-Arg-NHMec, and no peptidyl-dipeptidase activity.. Inhibited by the propeptide produced by autocleavage. Long isoform of CD74/Ii chain stabilizes the conformation of mature CTSL by binding to its active site and serving as a chaperone to help maintain a pool of mature enzyme in endocytic compartments and extracellular space of APCs. IFNG enhances the conversion into the CTSL mature and active form. Inhibited by CST6. Inhibited by the glycopeptide antibiotic teicoplanin. Inhibited by amantadine. Thiol protease important for the overall degradation of proteins in lysosomes. Plays a critical for normal cellular functions such as general protein turnover, antigen processing and bone remodeling. Involved in the solubilization of cross-linked TG/thyroglobulin and in the subsequent release of thyroid hormone thyroxine (T4) by limited proteolysis of TG/thyroglobulin in the thyroid follicle lumen. In neuroendocrine chromaffin cells secretory vesicles, catalyzes the prohormone proenkephalin processing to the active enkephalin peptide neurotransmitter. In thymus, regulates CD4(+) T cell positive selection by generating the major histocompatibility complex class II (MHCII) bound peptide ligands presented by cortical thymic epithelial cells. Also mediates invariant chain processing in cortical thymic epithelial cells. Major elastin-degrading enzyme at neutral pH. Accumulates as a mature and active enzyme in the extracellular space of antigen presenting cells (APCs) to regulate degradation of the extracellular matrix in the course of inflammation. Secreted form generates endostatin from COL18A1. Critical for cardiac morphology and function. Plays an important role in hair follicle morphogenesis and cycling, as well as epidermal differentiation. Required for maximal stimulation of steroidogenesis by TIMP1. The protein is Procathepsin L (CTSL) of Chlorocebus aethiops (Green monkey).